The primary structure comprises 370 residues: Probable G-protein coupled receptor 85 (370 aa).

At 1–25 (MANYSHAADNILQNLSPLTAFLKLT) the chain is on the extracellular side. A glycan (N-linked (GlcNAc...) asparagine) is linked at Asn-3. The helical transmembrane segment at 26–46 (SLGFIIGVSVVGNLLISILLA) threads the bilayer. The Cytoplasmic portion of the chain corresponds to 47–57 (KDKTLHRAPYY). The helical transmembrane segment at 58 to 78 (FLLDLCCSDILRSAICFPFVF) threads the bilayer. Over 79–96 (NSVKNGSTWTYGTLTCKV) the chain is Extracellular. An N-linked (GlcNAc...) asparagine glycan is attached at Asn-83. A disulfide bridge connects residues Cys-94 and Cys-172. The chain crosses the membrane as a helical span at residues 97 to 117 (IAFLGVLSCFHTAFMLFCISV). Over 118–137 (TRYLAIAHHRFYTKRLTFWT) the chain is Cytoplasmic. The chain crosses the membrane as a helical span at residues 138-158 (CLAVICMVWTLSVAMAFPPVL). Residues 159–188 (DVGTYSFIREEDQCTFQHRSFRANDSLGFM) are Extracellular-facing. Asn-182 is a glycosylation site (N-linked (GlcNAc...) asparagine). Residues 189–209 (LLLALILLATQLVYLKLIFFV) form a helical membrane-spanning segment. The Cytoplasmic segment spans residues 210–286 (HDRRKMKPVQ…FKMEKRISRM (77 aa)). Residues 287 to 307 (FYIMTFLFLTLWGPYLVACYW) form a helical membrane-spanning segment. Topologically, residues 308–313 (RVFARG) are extracellular. A helical transmembrane segment spans residues 314 to 334 (PVVPGGFLTAAVWMSFAQAGI). At 335–370 (NPFVCIFSNRELRRCFSTTLLYCRKSRLPREPYCVI) the chain is on the cytoplasmic side.

This sequence belongs to the G-protein coupled receptor 1 family. As to quaternary structure, interacts with DLG4 and DLG3.

The protein localises to the cell membrane. It is found in the endoplasmic reticulum. Functionally, orphan receptor. The sequence is that of Probable G-protein coupled receptor 85 (GPR85) from Pongo abelii (Sumatran orangutan).